The sequence spans 234 residues: Orotidine 5'-phosphate decarboxylase (234 aa).

Residues D10, K32, 59-68, T119, R180, Q189, G209, and R210 contribute to the substrate site; that span reads DLKFHDIPNT. The active-site Proton donor is the K61.

It belongs to the OMP decarboxylase family. Type 1 subfamily. As to quaternary structure, homodimer.

It carries out the reaction orotidine 5'-phosphate + H(+) = UMP + CO2. It functions in the pathway pyrimidine metabolism; UMP biosynthesis via de novo pathway; UMP from orotate: step 2/2. Functionally, catalyzes the decarboxylation of orotidine 5'-monophosphate (OMP) to uridine 5'-monophosphate (UMP). This Mannheimia succiniciproducens (strain KCTC 0769BP / MBEL55E) protein is Orotidine 5'-phosphate decarboxylase.